Reading from the N-terminus, the 362-residue chain is RNA-binding protein 48 (362 aa).

Positions 46–124 (WYLLIQGVPA…GLLHVCYAPE (79 aa)) constitute an RRM domain. Positions 334–362 (EVISSVPKPPEDKVEDVHRSRPLKQRRRI) are disordered. Basic and acidic residues predominate over residues 342-352 (PPEDKVEDVHR). A compositionally biased stretch (basic residues) spans 353-362 (SRPLKQRRRI).

The protein belongs to the RBM48 family. In terms of assembly, component of the minor spliceosome. Within this complex, interacts with ARMC7 and PRPF8/PRP8.

Its function is as follows. As a component of the minor spliceosome, involved in the splicing of U12-type introns in pre-mRNAs. This is RNA-binding protein 48 (RBM48) from Bos taurus (Bovine).